The sequence spans 431 residues: MENKSNSQILFAEAQQYIPGGVNSPVRAFKSVGQEFPRFIKFAKGAYLYDVDWNKYIDYIGSWGPMILGHCDDDVLEAIQCQVKNGLSYGAPCKQEVDLAKKIIELMPNIEQVRFVNSGTEATISAIRLARAYTCRNKIIKFEGCYHGHADEFLVAAGSGALSLGQPNSPGVPEDVVKDTLVASFNDMESIQALFEKYKDEIACIIVEPIAGNMNMIFPQDGFLAKLRAICDQNSSLLIFDEVMTGFRVALGGAQSIYNVKPDLTTLGKVIGGGMPVGAFGGRKEIMQKVSPAGPVYQAGTLSGNPIAMTAGIKTLEKISQPGFFDELGVKAQKLVDGLNEAAKAYDFNFHAKCLGGMFGLFFCSDKIAVNTFVDLGKTNLKMFNQFFAYMLDNGVYLAPSAYEAGFISIAHSDEDIEKTICLAKKFFQEN.

N6-(pyridoxal phosphate)lysine is present on Lys-269.

Belongs to the class-III pyridoxal-phosphate-dependent aminotransferase family. HemL subfamily. Homodimer. Pyridoxal 5'-phosphate serves as cofactor.

The protein localises to the cytoplasm. The catalysed reaction is (S)-4-amino-5-oxopentanoate = 5-aminolevulinate. Its pathway is porphyrin-containing compound metabolism; protoporphyrin-IX biosynthesis; 5-aminolevulinate from L-glutamyl-tRNA(Glu): step 2/2. The polypeptide is Glutamate-1-semialdehyde 2,1-aminomutase (Francisella tularensis subsp. holarctica (strain LVS)).